Here is a 376-residue protein sequence, read N- to C-terminus: uncharacterized protein (376 aa).

A signal peptide spans 1–31 (MSRHKVYKAISSYVIIAIIIIAIVAVVGVLL). The tract at residues 37 to 57 (SSSSVTSTTTPTTSSSVSPSS) is disordered.

This sequence belongs to the bacterial solute-binding protein 1 family. WtpA subfamily.

This is an uncharacterized protein from Sulfurisphaera tokodaii (strain DSM 16993 / JCM 10545 / NBRC 100140 / 7) (Sulfolobus tokodaii).